Reading from the N-terminus, the 263-residue chain is UPF0739 protein C1orf74 homolog (263 aa).

It belongs to the UPF0739 family.

This chain is UPF0739 protein C1orf74 homolog, found in Bos taurus (Bovine).